The sequence spans 300 residues: Bifunctional protein FolD (300 aa).

NADP(+) is bound by residues 169-171, S196, and I237; that span reads GRG.

Belongs to the tetrahydrofolate dehydrogenase/cyclohydrolase family. Homodimer.

The catalysed reaction is (6R)-5,10-methylene-5,6,7,8-tetrahydrofolate + NADP(+) = (6R)-5,10-methenyltetrahydrofolate + NADPH. It catalyses the reaction (6R)-5,10-methenyltetrahydrofolate + H2O = (6R)-10-formyltetrahydrofolate + H(+). It functions in the pathway one-carbon metabolism; tetrahydrofolate interconversion. Functionally, catalyzes the oxidation of 5,10-methylenetetrahydrofolate to 5,10-methenyltetrahydrofolate and then the hydrolysis of 5,10-methenyltetrahydrofolate to 10-formyltetrahydrofolate. This Clavibacter sepedonicus (Clavibacter michiganensis subsp. sepedonicus) protein is Bifunctional protein FolD.